A 214-amino-acid polypeptide reads, in one-letter code: Coiled-coil domain-containing protein 169 (214 aa).

The stretch at Asp-29–Met-154 forms a coiled coil. Polar residues predominate over residues Ser-155–Asp-170. The tract at residues Ser-155 to Pro-214 is disordered.

Belongs to the CCDC169 family.

The sequence is that of Coiled-coil domain-containing protein 169 (CCDC169) from Homo sapiens (Human).